Reading from the N-terminus, the 74-residue chain is Toxin BmKaTx17 (74 aa).

Positions 1 to 8 (LLMTGVES) are cleaved as a signal peptide. The region spanning 10 to 72 (RDAYIAKNYN…KPIRIPGKCH (63 aa)) is the LCN-type CS-alpha/beta domain. 4 disulfide bridges follow: Cys-20-Cys-71, Cys-24-Cys-44, Cys-30-Cys-54, and Cys-34-Cys-56. A propeptide spans 73–74 (RR) (removed by a carboxypeptidase).

This sequence belongs to the long (4 C-C) scorpion toxin superfamily. Sodium channel inhibitor family. Alpha subfamily. In terms of tissue distribution, expressed by the venom gland.

The protein localises to the secreted. Functionally, alpha toxins bind voltage-independently at site-3 of sodium channels (Nav) and inhibit the inactivation of the activated channels, thereby blocking neuronal transmission. The sequence is that of Toxin BmKaTx17 from Olivierus martensii (Manchurian scorpion).